The chain runs to 299 residues: N-acetylmuramic acid 6-phosphate etherase (299 aa).

The SIS domain occupies Cys55–Lys218. Residue Glu83 is the Proton donor of the active site. Residue Glu114 is part of the active site.

It belongs to the GCKR-like family. MurNAc-6-P etherase subfamily. Homodimer.

The catalysed reaction is N-acetyl-D-muramate 6-phosphate + H2O = N-acetyl-D-glucosamine 6-phosphate + (R)-lactate. The protein operates within amino-sugar metabolism; N-acetylmuramate degradation. In terms of biological role, specifically catalyzes the cleavage of the D-lactyl ether substituent of MurNAc 6-phosphate, producing GlcNAc 6-phosphate and D-lactate. The chain is N-acetylmuramic acid 6-phosphate etherase from Pseudothermotoga lettingae (strain ATCC BAA-301 / DSM 14385 / NBRC 107922 / TMO) (Thermotoga lettingae).